The chain runs to 611 residues: ATP-dependent zinc metalloprotease FtsH 1 (611 aa).

The Cytoplasmic segment spans residues 1 to 6 (MNDNNK). Residues 7-27 (IIRSMVLYLLIFIAIYAMVQL) traverse the membrane as a helical segment. The Extracellular segment spans residues 28 to 107 (YSQSTEPITD…KSEPQVGPPW (80 aa)). A helical membrane pass occupies residues 108-128 (WVQMLPSLFLIVIFIIFWYIF). 124–131 (FWYIFMQQ) is an ATP binding site. At 129–611 (MQQAQGGGGS…GEDIEGVQFA (483 aa)) the chain is on the cytoplasmic side. Position 423 (His423) interacts with Zn(2+). Glu424 is an active-site residue. Residues His427 and Asp499 each contribute to the Zn(2+) site.

It in the central section; belongs to the AAA ATPase family. The protein in the C-terminal section; belongs to the peptidase M41 family. As to quaternary structure, homohexamer. Zn(2+) serves as cofactor.

It is found in the cell membrane. Its function is as follows. Acts as a processive, ATP-dependent zinc metallopeptidase for both cytoplasmic and membrane proteins. Plays a role in the quality control of integral membrane proteins. The chain is ATP-dependent zinc metalloprotease FtsH 1 from Thermoanaerobacter sp. (strain X514).